Consider the following 234-residue polypeptide: MPLNCDTKTAGEISSSIPSGSGSHQPAAQSSGMKIAEIFTSLQGEGLTSGYPTIFIRLAGCNLSCSYCDTPASRQGGMDMNVSEVVAGALLQKPHYVCITGGEPLLQKDEVAELARQLIKAGKMVSIETNGTVPFDDLPSDISICMDVKCPSSGEFSNINLLSDLKSTDSVKFVVGTDDDLQYAEKVIMSHPTKAEIFISPIYGTDYQRIASYILSRNLPARMQLQLHKFIGLP.

Residues 1–28 form a disordered region; sequence MPLNCDTKTAGEISSSIPSGSGSHQPAA. Residues 13-23 show a composition bias toward low complexity; the sequence is ISSSIPSGSGS. Substrate contacts are provided by residues 42-44 and Arg57; that span reads LQG. The region spanning 48 to 234 is the Radical SAM core domain; the sequence is TSGYPTIFIR…LQLHKFIGLP (187 aa). Cys61, Cys65, and Cys68 together coordinate [4Fe-4S] cluster. Thr70 contributes to the Mg(2+) binding site. Substrate is bound at residue Thr100. Residue Gly102 participates in S-adenosyl-L-methionine binding. Pro234 contributes to the substrate binding site.

This sequence belongs to the radical SAM superfamily. 7-carboxy-7-deazaguanine synthase family. In terms of assembly, homodimer. Requires [4Fe-4S] cluster as cofactor. S-adenosyl-L-methionine serves as cofactor. It depends on Mg(2+) as a cofactor.

The catalysed reaction is 6-carboxy-5,6,7,8-tetrahydropterin + H(+) = 7-carboxy-7-deazaguanine + NH4(+). It participates in purine metabolism; 7-cyano-7-deazaguanine biosynthesis. Functionally, catalyzes the complex heterocyclic radical-mediated conversion of 6-carboxy-5,6,7,8-tetrahydropterin (CPH4) to 7-carboxy-7-deazaguanine (CDG), a step common to the biosynthetic pathways of all 7-deazapurine-containing compounds. The polypeptide is 7-carboxy-7-deazaguanine synthase (Methanospirillum hungatei JF-1 (strain ATCC 27890 / DSM 864 / NBRC 100397 / JF-1)).